A 399-amino-acid polypeptide reads, in one-letter code: C-type lectin domain family 4 member M (399 aa).

Residues 1 to 49 are Cytoplasmic-facing; the sequence is MSDSKEQRVQPLGLLEEDPTTSGIRLFPRDFQFQQTHGHKSSTGCLGHG. An Endocytosis signal motif is present at residues 14–15; that stretch reads LL. Residues 50 to 70 form a helical; Signal-anchor for type II membrane protein membrane-spanning segment; it reads PLVLQLLSFTLLAGFLVAILV. Over 71–399 the chain is Extracellular; sequence QVYKGPSSLS…KKPTACFRDE (329 aa). Asn92 carries N-linked (GlcNAc...) asparagine glycosylation. A run of 7 repeats spans residues 108–130, 131–153, 154–176, 177–199, 200–222, 223–245, and 246–268. A 7 X approximate tandem repeats region spans residues 108-269; the sequence is KLQEIYQELT…AFERLCCRCP (162 aa). Disulfide bonds link Cys265/Cys395, Cys268/Cys279, Cys296/Cys389, and Cys368/Cys381. The C-type lectin domain maps to 274 to 390; it reads FFQGNCYFIS…CNVDNYWICK (117 aa). Positions 359, 361, 363, 366, 377, and 378 each coordinate Ca(2+). Asn361 is a glycosylation site (N-linked (GlcNAc...) asparagine).

As to quaternary structure, homotetramer.

The protein localises to the membrane. Its function is as follows. Probable pathogen-recognition receptor involved in peripheral immune surveillance in liver. May mediate the endocytosis of pathogens which are subsequently degraded in lysosomal compartments. Probably recognizes in a calcium-dependent manner high mannose N-linked oligosaccharides in a variety of pathogen antigens. Is a receptor for ICAM3, probably by binding to mannose-like carbohydrates. The chain is C-type lectin domain family 4 member M (CLEC4M) from Nomascus concolor (Black crested gibbon).